The following is a 223-amino-acid chain: Peptidyl-prolyl cis-trans isomerase, mitochondrial (223 aa).

A mitochondrion-targeting transit peptide spans 1–44; sequence MFGPRHFSVLKTTGSLVSSTFSSSLKPTATFSCARAFSQTSSIM. Positions 62–222 constitute a PPIase cyclophilin-type domain; that stretch reads NKPTSEIKAQ…KKPTIVDCGA (161 aa).

It belongs to the cyclophilin-type PPIase family.

The protein resides in the mitochondrion. Its subcellular location is the cytoplasm. The catalysed reaction is [protein]-peptidylproline (omega=180) = [protein]-peptidylproline (omega=0). With respect to regulation, binds cyclosporin A (CsA). CsA mediates some of its effects via an inhibitory action on PPIase. Functionally, PPIases accelerate the folding of proteins. It catalyzes the cis-trans isomerization of proline imidic peptide bonds in oligopeptides. The sequence is that of Peptidyl-prolyl cis-trans isomerase, mitochondrial (csr-1) from Neurospora crassa (strain ATCC 24698 / 74-OR23-1A / CBS 708.71 / DSM 1257 / FGSC 987).